The chain runs to 153 residues: Melatonin receptor type 1A X2.0 (153 aa).

The Cytoplasmic segment spans residues 1–12 (HSSWYNRLFSNS). A helical membrane pass occupies residues 13 to 33 (GTICYVGLVWVLALGAILPNL). Residues 34–57 (FVGSLRCDPRIFSCTFAQYVSSYY) lie on the Extracellular side of the membrane. The chain crosses the membrane as a helical span at residues 58 to 78 (TIAVVIFHFFLPIGVVSYCYL). Topologically, residues 79-112 (RIWVLVLNIRHRVKPDRHLHHQTWPYNIHGFITM) are cytoplasmic. Residues 113–133 (FVVFVLFAVCWGPLNIIGLTV) form a helical membrane-spanning segment. Residues 134–145 (AIYPPLGDSIPQ) are Extracellular-facing. The helical transmembrane segment at 146–153 (WLFVASYF) threads the bilayer.

The protein belongs to the G-protein coupled receptor 1 family.

The protein localises to the cell membrane. Functionally, high affinity receptor for melatonin. The activity of this receptor is mediated by pertussis toxin sensitive G proteins that inhibits adenylate cyclase activity. The chain is Melatonin receptor type 1A X2.0 from Xenopus laevis (African clawed frog).